Here is a 367-residue protein sequence, read N- to C-terminus: Heme A synthase (367 aa).

5 helical membrane passes run Gly12 to Gly32, Leu99 to Gly119, Leu127 to Val147, Leu163 to Gly183, and Ala198 to Ala218. Position 264 (His264) interacts with heme. 3 helical membrane passes run Val266–Gly286, Gly296–Val316, and Pro317–Val337. Position 324 (His324) interacts with heme.

It belongs to the COX15/CtaA family. Type 2 subfamily. In terms of assembly, interacts with CtaB. It depends on heme b as a cofactor.

The protein resides in the cell membrane. The catalysed reaction is Fe(II)-heme o + 2 A + H2O = Fe(II)-heme a + 2 AH2. The protein operates within porphyrin-containing compound metabolism; heme A biosynthesis; heme A from heme O: step 1/1. Functionally, catalyzes the conversion of heme O to heme A by two successive hydroxylations of the methyl group at C8. The first hydroxylation forms heme I, the second hydroxylation results in an unstable dihydroxymethyl group, which spontaneously dehydrates, resulting in the formyl group of heme A. The protein is Heme A synthase of Methylobacterium radiotolerans (strain ATCC 27329 / DSM 1819 / JCM 2831 / NBRC 15690 / NCIMB 10815 / 0-1).